Consider the following 137-residue polypeptide: Large ribosomal subunit protein uL16 (137 aa).

Belongs to the universal ribosomal protein uL16 family. In terms of assembly, part of the 50S ribosomal subunit.

In terms of biological role, binds 23S rRNA and is also seen to make contacts with the A and possibly P site tRNAs. The chain is Large ribosomal subunit protein uL16 from Lawsonia intracellularis (strain PHE/MN1-00).